The primary structure comprises 1162 residues: Lysine-specific demethylase 2A (1162 aa).

Ser-28 carries the phosphoserine modification. Positions 148–316 constitute a JmjC domain; sequence FSHTRLENMV…MQLKIYNIED (169 aa). Thr-209 serves as a coordination point for substrate. Residues His-212 and Asp-214 each coordinate Fe cation. A substrate-binding site is contributed by Lys-229. A Fe cation-binding site is contributed by His-284. The segment at 367–389 is disordered; it reads GLESGNGDEEAVDREPRRLSSRR. Residues Ser-390 and Ser-394 each carry the phosphoserine modification. A Glycyl lysine isopeptide (Lys-Gly) (interchain with G-Cter in SUMO2) cross-link involves residue Lys-505. The interval 532–557 is disordered; it reads VPTIPITKPHTMKPAPRLTPVRPAAA. Position 550 is a phosphothreonine (Thr-550). Ser-558 bears the Phosphoserine mark. A CXXC-type zinc finger spans residues 564–610; it reads ARRRRVRCRKCKACVQGECGVCHYCRDMKKFGGPGRMKQSCVLRQCL. Residues Cys-571, Cys-574, Cys-577, Cys-582, Cys-585, Cys-588, Cys-604, Cys-609, Cys-620, and Cys-623 each coordinate Zn(2+). A PHD-type zinc finger spans residues 617–678; sequence SVTCSLCGEV…CWECPKCYQE (62 aa). At Thr-632 the chain carries Phosphothreonine. Zn(2+)-binding residues include Cys-642, Cys-645, His-650, Cys-653, Cys-672, and Cys-675. Phosphoserine is present on Ser-692. The disordered stretch occupies residues 704–789; the sequence is PLRSCDEPLT…PSGKKELSEV (86 aa). Thr-713 is subject to Phosphothreonine. Phosphoserine occurs at positions 718 and 731. Basic and acidic residues-rich tracts occupy residues 746-757 and 771-789; these read SDHHSASRDERF and TMVREKENNPSGKKELSEV. Ser-825, Ser-832, Ser-869, and Ser-883 each carry phosphoserine. Positions 839-887 are disordered; it reads HCPARTPQRGDEEGLGGEEEEEEEEEEEDDSAEEGGAARLNGRGSWAQD. The segment covering 851–871 has biased composition (acidic residues); the sequence is EGLGGEEEEEEEEEEEDDSAE. An F-box domain is found at 889-936; that stretch reads DESWMQREVWMSVFRYLSRRELCECMRVCKTWYKWCCDKRLWTKIDLS. LRR repeat units follow at residues 961–982 and 984–1010; these read WTNISKKQLTWLVNRLPGLKDL and LAGCSWSAVSALSTSSCPLLRTLDLRW. Arg-1020 is subject to ADP-ribosylarginine. 4 LRR repeats span residues 1048 to 1073, 1074 to 1103, 1104 to 1128, and 1129 to 1156; these read GLDITDATLRLIIRHMPLLSRLDLSH, CSHLTDQSSNLLTAVGSSTRYSLTELNMAG, CNKLTDQTLIYLRRIANVTLIDLRG, and CKQITRKACEHFISDLSINSLYCLSDEK.

This sequence belongs to the JHDM1 histone demethylase family. In terms of assembly, interacts with CBX5/HP1A; the interaction promotes CBX5 localization to chromatin. The SKP1-KDM2A complex interacts with UBB. Part of a SCF (SKP1-cullin-F-box) protein ligase complex. The cofactor is Fe(2+). In terms of processing, mono-ADP-ribosylated at Arg-1020 in response to DNA damage, leading to displacement from chromatin, resulting in increased dimethylation of histone H3 at 'Lys-36'. In terms of tissue distribution, widely expressed, with highest levels in brain, testis and ovary, followed by lung.

The protein resides in the nucleus. It is found in the nucleoplasm. Its subcellular location is the chromosome. It carries out the reaction N(6),N(6)-dimethyl-L-lysyl(36)-[histone H3] + 2 2-oxoglutarate + 2 O2 = L-lysyl(36)-[histone H3] + 2 formaldehyde + 2 succinate + 2 CO2. Functionally, histone demethylase that specifically demethylates 'Lys-36' of histone H3, thereby playing a central role in histone code. Preferentially demethylates dimethylated H3 'Lys-36' residue while it has weak or no activity for mono- and tri-methylated H3 'Lys-36'. May also recognize and bind to some phosphorylated proteins and promote their ubiquitination and degradation. Required to maintain the heterochromatic state. Associates with centromeres and represses transcription of small non-coding RNAs that are encoded by the clusters of satellite repeats at the centromere. Required to sustain centromeric integrity and genomic stability, particularly during mitosis. Regulates circadian gene expression by repressing the transcriptional activator activity of CLOCK-BMAL1 heterodimer and RORA in a catalytically-independent manner. This is Lysine-specific demethylase 2A (KDM2A) from Homo sapiens (Human).